Here is a 458-residue protein sequence, read N- to C-terminus: UDP-N-acetylmuramoylalanine--D-glutamate ligase (458 aa).

119 to 125 (GSNGKTT) is an ATP binding site.

It belongs to the MurCDEF family.

The protein resides in the cytoplasm. The enzyme catalyses UDP-N-acetyl-alpha-D-muramoyl-L-alanine + D-glutamate + ATP = UDP-N-acetyl-alpha-D-muramoyl-L-alanyl-D-glutamate + ADP + phosphate + H(+). Its pathway is cell wall biogenesis; peptidoglycan biosynthesis. Its function is as follows. Cell wall formation. Catalyzes the addition of glutamate to the nucleotide precursor UDP-N-acetylmuramoyl-L-alanine (UMA). This is UDP-N-acetylmuramoylalanine--D-glutamate ligase from Limosilactobacillus fermentum (strain NBRC 3956 / LMG 18251) (Lactobacillus fermentum).